The following is a 171-amino-acid chain: Putative phosphoesterase ABC1741 (171 aa).

Residue H34 is the Proton donor of the active site. Short sequence motifs (HXTX) lie at residues H34–L37 and H116–I119. H116 acts as the Proton acceptor in catalysis.

Belongs to the 2H phosphoesterase superfamily. YjcG family.

This chain is Putative phosphoesterase ABC1741, found in Shouchella clausii (strain KSM-K16) (Alkalihalobacillus clausii).